The sequence spans 232 residues: Ubiquitin-conjugating enzyme E2-24 kDa (232 aa).

Over residues 1 to 37 (MSSTPAAGSAAEVATSSATSNAPSAPSTTASNVSNTS) the composition is skewed to low complexity. Positions 1–87 (MSSTPAAGSA…PRISRALGTS (87 aa)) are disordered. Residues 58–67 (GASGSNAGGG) are compositionally biased toward gly residues. The region spanning 86–232 (TSAKRIQKEL…ARLWTKRYAT (147 aa)) is the UBC core domain. Cys-170 (glycyl thioester intermediate) is an active-site residue.

This sequence belongs to the ubiquitin-conjugating enzyme family.

The catalysed reaction is S-ubiquitinyl-[E1 ubiquitin-activating enzyme]-L-cysteine + [E2 ubiquitin-conjugating enzyme]-L-cysteine = [E1 ubiquitin-activating enzyme]-L-cysteine + S-ubiquitinyl-[E2 ubiquitin-conjugating enzyme]-L-cysteine.. The protein operates within protein modification; protein ubiquitination. Catalyzes the covalent attachment of ubiquitin to other proteins. This Drosophila melanogaster (Fruit fly) protein is Ubiquitin-conjugating enzyme E2-24 kDa.